Reading from the N-terminus, the 934-residue chain is Bifunctional uridylyltransferase/uridylyl-removing enzyme (934 aa).

A uridylyltransferase region spans residues 1–379; that stretch reads MSAHDLKLEE…TFSRRKRKLS (379 aa). The uridylyl-removing stretch occupies residues 380–736; sequence DDGAFISENH…AKPHAFEAVT (357 aa). One can recognise an HD domain in the interval 496-613; the sequence is VDEHLLRCIA…IDFADTVQTM (118 aa). ACT domains are found at residues 737 to 818 and 848 to 931; these read EITV…DMLA and VIEV…RSPQ.

Belongs to the GlnD family. It depends on Mg(2+) as a cofactor.

The enzyme catalyses [protein-PII]-L-tyrosine + UTP = [protein-PII]-uridylyl-L-tyrosine + diphosphate. It carries out the reaction [protein-PII]-uridylyl-L-tyrosine + H2O = [protein-PII]-L-tyrosine + UMP + H(+). With respect to regulation, uridylyltransferase (UTase) activity is inhibited by glutamine, while glutamine activates uridylyl-removing (UR) activity. In terms of biological role, modifies, by uridylylation and deuridylylation, the PII regulatory proteins (GlnB and homologs), in response to the nitrogen status of the cell that GlnD senses through the glutamine level. Under low glutamine levels, catalyzes the conversion of the PII proteins and UTP to PII-UMP and PPi, while under higher glutamine levels, GlnD hydrolyzes PII-UMP to PII and UMP (deuridylylation). Thus, controls uridylylation state and activity of the PII proteins, and plays an important role in the regulation of nitrogen assimilation and metabolism. This is Bifunctional uridylyltransferase/uridylyl-removing enzyme from Brucella ovis (strain ATCC 25840 / 63/290 / NCTC 10512).